A 427-amino-acid chain; its full sequence is MKLQKPKGTQDLLPQDSAKWQYVENFTRSIFKQYNYAEIRTPIFEHYEVISRSVGDTTDIVTKEMYDFYDKGERHITLRPEGTAPVVRSYVENKLFAPEVQKPAKFYYMGPMFRYERPQAGRLRQFHQIGVECFGSNNPATDVETIAMAYHFFEELGIKDIRLHLNSLGNPESRAAYRQALIDYLTPLKEQLSKDSQRRLEENPLRVLDSKEKEDKVAVENAPSILDYLDEESTVHFEAVRSMLDNLGITYTIDTNMVRGLDYYNHTIFEFMTEVGGNDLTICAGGRYDGLVTYFGGPETPAFGFGMGIERLILVLEKQGIELPLDTQLDVYIAVLGQEANGGALDLVQAIRKQGFRAERDYLDRKLKAQFKSADVFGAKAIITLGGSEIESGQVVVKNNQTRSQVETSLEALKTDFASILEELEKQ.

Belongs to the class-II aminoacyl-tRNA synthetase family. Homodimer.

It is found in the cytoplasm. It carries out the reaction tRNA(His) + L-histidine + ATP = L-histidyl-tRNA(His) + AMP + diphosphate + H(+). The protein is Histidine--tRNA ligase of Streptococcus suis (strain 98HAH33).